The primary structure comprises 1380 residues: DNA-directed RNA polymerase subunit beta (1380 aa).

The protein belongs to the RNA polymerase beta chain family. The RNAP catalytic core consists of 2 alpha, 1 beta, 1 beta' and 1 omega subunit. When a sigma factor is associated with the core the holoenzyme is formed, which can initiate transcription.

It catalyses the reaction RNA(n) + a ribonucleoside 5'-triphosphate = RNA(n+1) + diphosphate. In terms of biological role, DNA-dependent RNA polymerase catalyzes the transcription of DNA into RNA using the four ribonucleoside triphosphates as substrates. In Sinorhizobium medicae (strain WSM419) (Ensifer medicae), this protein is DNA-directed RNA polymerase subunit beta.